The chain runs to 310 residues: Tetrahydromethanopterin S-methyltransferase subunit H (310 aa).

The protein belongs to the MtrH family. The complex is composed of 8 subunits; MtrA, MtrB, MtrC, MtrD, MtrE, MtrF, MtrG and MtrH.

It catalyses the reaction 5-methyl-5,6,7,8-tetrahydromethanopterin + coenzyme M + 2 Na(+)(in) = 5,6,7,8-tetrahydromethanopterin + methyl-coenzyme M + 2 Na(+)(out). It functions in the pathway one-carbon metabolism; methanogenesis from CO(2); methyl-coenzyme M from 5,10-methylene-5,6,7,8-tetrahydromethanopterin: step 2/2. Part of a complex that catalyzes the formation of methyl-coenzyme M and tetrahydromethanopterin from coenzyme M and methyl-tetrahydromethanopterin. This is an energy-conserving, sodium-ion translocating step. MtrH catalyzes the transfer of the methyl group from methyl-tetrahydromethanopterin to the corrinoid prosthetic group of MtrA. This Methanothermobacter thermautotrophicus (strain ATCC 29096 / DSM 1053 / JCM 10044 / NBRC 100330 / Delta H) (Methanobacterium thermoautotrophicum) protein is Tetrahydromethanopterin S-methyltransferase subunit H.